A 157-amino-acid chain; its full sequence is Protein Smg (157 aa).

The protein belongs to the Smg family.

The polypeptide is Protein Smg (Pectobacterium atrosepticum (strain SCRI 1043 / ATCC BAA-672) (Erwinia carotovora subsp. atroseptica)).